Consider the following 1244-residue polypeptide: ATP-dependent helicase/nuclease subunit A (1244 aa).

In terms of domain architecture, UvrD-like helicase ATP-binding spans 4–475 (KKWTAEQLAA…IGLSKNFRSR (472 aa)). Residue 25–32 (AAAGAGKT) coordinates ATP. In terms of domain architecture, UvrD-like helicase C-terminal spans 515-816 (EDVKTATGPV…RIMSIHKSKG (302 aa)). Residues 538–559 (EQNTDSAEEKLTDGEEQEDLDS) form a disordered region.

The protein belongs to the helicase family. AddA subfamily. Heterodimer of AddA and AddB/RexB. Mg(2+) is required as a cofactor.

The catalysed reaction is Couples ATP hydrolysis with the unwinding of duplex DNA by translocating in the 3'-5' direction.. It catalyses the reaction ATP + H2O = ADP + phosphate + H(+). Its function is as follows. The heterodimer acts as both an ATP-dependent DNA helicase and an ATP-dependent, dual-direction single-stranded exonuclease. Recognizes the chi site generating a DNA molecule suitable for the initiation of homologous recombination. The AddA nuclease domain is required for chi fragment generation; this subunit has the helicase and 3' -&gt; 5' nuclease activities. The polypeptide is ATP-dependent helicase/nuclease subunit A (Desulforamulus reducens (strain ATCC BAA-1160 / DSM 100696 / MI-1) (Desulfotomaculum reducens)).